Reading from the N-terminus, the 130-residue chain is Small ribosomal subunit protein uS8A (130 aa).

This sequence belongs to the universal ribosomal protein uS8 family.

The polypeptide is Small ribosomal subunit protein uS8A (RpS15Aa) (Drosophila melanogaster (Fruit fly)).